The sequence spans 100 residues: Small ribosomal subunit protein uS14 (100 aa).

The protein belongs to the universal ribosomal protein uS14 family. Part of the 30S ribosomal subunit. Contacts proteins S3 and S10.

Binds 16S rRNA, required for the assembly of 30S particles and may also be responsible for determining the conformation of the 16S rRNA at the A site. The sequence is that of Small ribosomal subunit protein uS14 from Synechococcus sp. (strain RCC307).